The sequence spans 130 residues: Small ribosomal subunit protein uS8 (130 aa).

This sequence belongs to the universal ribosomal protein uS8 family. Part of the 30S ribosomal subunit. Contacts proteins S5 and S12.

One of the primary rRNA binding proteins, it binds directly to 16S rRNA central domain where it helps coordinate assembly of the platform of the 30S subunit. This is Small ribosomal subunit protein uS8 from Marinomonas sp. (strain MWYL1).